The following is a 285-amino-acid chain: MTAITEKETSKFVRIQDGDLDLNIHYNDCGEGKETVVMLHGSGPGASGWANFNRNIEPLVNAGFRVILMDCPGWSKSDSIVSTGSRSDLNARVLKGLVDKLDLDKIHILGNSMGGHTAVAFSLTWPERVGKLVLMGGGTGGVSPFVPMPSEGIKLLNGLYREPTIENLKKMMSIFVYDTSDLTEELFQTRLDNMLARKDHLENFTASLAANLKQFPDFGHRLGEINAETLVIWGRNDRFVPLDTGLRLVAGISNSQLHVFNKCGHWAQWEHADTFNRMVLDFLTH.

H265 serves as the catalytic Proton acceptor.

This sequence belongs to the AB hydrolase superfamily. MhpC family. In terms of assembly, homodimer.

It carries out the reaction (2Z,4E)-2-hydroxy-6-oxonona-2,4-dienedioate + H2O = (2Z)-2-hydroxypenta-2,4-dienoate + succinate + H(+). The enzyme catalyses (2Z,4E,7E)-2-hydroxy-6-oxonona-2,4,7-trienedioate + H2O = (2Z)-2-hydroxypenta-2,4-dienoate + fumarate + H(+). Its pathway is aromatic compound metabolism; 3-phenylpropanoate degradation. Functionally, catalyzes the cleavage of the C5-C6 bond of 2-hydroxy-6-oxononadienedioate and 2-hydroxy-6-oxononatrienedioate, a dienol ring fission product of the bacterial meta-cleavage pathway for degradation of phenylpropionic acid. The polypeptide is 2-hydroxy-6-oxononadienedioate/2-hydroxy-6-oxononatrienedioate hydrolase 1 (Pseudomonas putida (Arthrobacter siderocapsulatus)).